The chain runs to 234 residues: Potassium/proton antiporter CemA (234 aa).

A run of 4 helical transmembrane segments spans residues 8–28 (IPLRYLSSIVFVVFLPWWIPL), 117–137 (TICFVILSGYSILCNEELFIL), 157–177 (ILFVTDLCIGFHSPRGWELLI), and 193–213 (IILSVLVSTFPVVLDTFFKYW).

Belongs to the CemA family.

It localises to the plastid. Its subcellular location is the chloroplast inner membrane. It carries out the reaction K(+)(in) + H(+)(out) = K(+)(out) + H(+)(in). In terms of biological role, contributes to K(+)/H(+) antiport activity by supporting proton efflux to control proton extrusion and homeostasis in chloroplasts in a light-dependent manner to modulate photosynthesis. Prevents excessive induction of non-photochemical quenching (NPQ) under continuous-light conditions. Indirectly promotes efficient inorganic carbon uptake into chloroplasts. This is Potassium/proton antiporter CemA from Citrus sinensis (Sweet orange).